Reading from the N-terminus, the 247-residue chain is uncharacterized protein (247 aa).

4 residues coordinate NAD(+): Leu-19, Asp-38, Asp-63, and Val-64. Residue Ser-142 coordinates substrate. Tyr-155, Lys-159, and Ser-190 together coordinate NAD(+). Tyr-155 functions as the Proton acceptor in the catalytic mechanism.

This sequence belongs to the short-chain dehydrogenases/reductases (SDR) family.

This is an uncharacterized protein from Mycobacterium bovis (strain ATCC BAA-935 / AF2122/97).